A 600-amino-acid polypeptide reads, in one-letter code: Elongation factor 4 (600 aa).

The tr-type G domain occupies 4-186 (SKIRNFSIIA…AIVDKIPPPS (183 aa)). Residues 16 to 21 (DHGKST) and 133 to 136 (NKID) contribute to the GTP site.

This sequence belongs to the TRAFAC class translation factor GTPase superfamily. Classic translation factor GTPase family. LepA subfamily.

It localises to the cell membrane. The catalysed reaction is GTP + H2O = GDP + phosphate + H(+). Its function is as follows. Required for accurate and efficient protein synthesis under certain stress conditions. May act as a fidelity factor of the translation reaction, by catalyzing a one-codon backward translocation of tRNAs on improperly translocated ribosomes. Back-translocation proceeds from a post-translocation (POST) complex to a pre-translocation (PRE) complex, thus giving elongation factor G a second chance to translocate the tRNAs correctly. Binds to ribosomes in a GTP-dependent manner. The polypeptide is Elongation factor 4 (Mycoplasma capricolum subsp. capricolum (strain California kid / ATCC 27343 / NCTC 10154)).